Reading from the N-terminus, the 26-residue chain is Dermaseptin-J3 (26 aa).

At V26 the chain carries Valine amide.

Expressed by the skin glands.

The protein localises to the secreted. Functionally, has antimicrobial activity. The polypeptide is Dermaseptin-J3 (Phasmahyla jandaia (Jandaia leaf frog)).